The primary structure comprises 354 residues: Selenide, water dikinase (354 aa).

Selenocysteine 21 is an active-site residue. Residue selenocysteine 21 is a non-standard amino acid, selenocysteine. ATP-binding positions include lysine 24 and 51 to 53 (TSD). Aspartate 54 lines the Mg(2+) pocket. Residues aspartate 71, aspartate 94, and 141–143 (GHT) each bind ATP. Position 94 (aspartate 94) interacts with Mg(2+). Aspartate 229 lines the Mg(2+) pocket.

The protein belongs to the selenophosphate synthase 1 family. Class I subfamily. As to quaternary structure, homodimer. The cofactor is Mg(2+).

The enzyme catalyses hydrogenselenide + ATP + H2O = selenophosphate + AMP + phosphate + 2 H(+). In terms of biological role, synthesizes selenophosphate from selenide and ATP. This Treponema denticola (strain ATCC 35405 / DSM 14222 / CIP 103919 / JCM 8153 / KCTC 15104) protein is Selenide, water dikinase.